A 452-amino-acid polypeptide reads, in one-letter code: Protein CLT3, chloroplastic (452 aa).

The N-terminal 34 residues, 1-34 (MATTSRRFTTGLFASITSVKSHSANRPQSISLIR), are a transit peptide targeting the chloroplast. 10 consecutive transmembrane segments (helical) span residues 105-125 (AEIV…RVMY), 137-157 (FFLA…ILYF), 175-195 (PFLI…AAAA), 202-222 (TTVL…IFLG), 230-250 (ILGC…GSGA), 258-278 (GVLW…GTVL), 307-327 (FQAI…GIPF), 353-373 (GAPF…IALL), 389-409 (TVSV…LGVA), and 412-432 (LPKG…LYSW).

Belongs to the CRT-like transporter family.

The protein resides in the plastid. Its subcellular location is the chloroplast membrane. In terms of biological role, involved in thiol transport from the plastid to the cytosol. Transports probably both glutathione (GSH) and its precursor, gamma-glutamylcysteine (gamma-EC). Exhibits some functional redundancy with CLT1 in maintaining the root GSH pool. This Arabidopsis thaliana (Mouse-ear cress) protein is Protein CLT3, chloroplastic.